We begin with the raw amino-acid sequence, 334 residues long: Glycerol-3-phosphate dehydrogenase [NAD(P)+] (334 aa).

4 residues coordinate NADPH: Ser-14, Tyr-15, His-35, and Lys-109. Sn-glycerol 3-phosphate is bound by residues Lys-109, Gly-138, and Thr-140. Position 142 (Ala-142) interacts with NADPH. The sn-glycerol 3-phosphate site is built by Lys-194, Asp-247, Ser-257, Arg-258, and Asn-259. The active-site Proton acceptor is the Lys-194. Arg-258 provides a ligand contact to NADPH. Positions 282 and 284 each coordinate NADPH.

It belongs to the NAD-dependent glycerol-3-phosphate dehydrogenase family.

Its subcellular location is the cytoplasm. It carries out the reaction sn-glycerol 3-phosphate + NAD(+) = dihydroxyacetone phosphate + NADH + H(+). The enzyme catalyses sn-glycerol 3-phosphate + NADP(+) = dihydroxyacetone phosphate + NADPH + H(+). Its pathway is membrane lipid metabolism; glycerophospholipid metabolism. Catalyzes the reduction of the glycolytic intermediate dihydroxyacetone phosphate (DHAP) to sn-glycerol 3-phosphate (G3P), the key precursor for phospholipid synthesis. The sequence is that of Glycerol-3-phosphate dehydrogenase [NAD(P)+] from Psychromonas ingrahamii (strain DSM 17664 / CCUG 51855 / 37).